The primary structure comprises 610 residues: V-type proton ATPase catalytic subunit A (610 aa).

ATP is bound at residue 245–252 (GAFGCGKT).

The protein belongs to the ATPase alpha/beta chains family. V-ATPase is a heteromultimeric enzyme composed of a peripheral catalytic V1 complex (main components: subunits A, B, C, D, E, and F) attached to an integral membrane V0 proton pore complex (main component: the proteolipid protein).

It carries out the reaction ATP + H2O + 4 H(+)(in) = ADP + phosphate + 5 H(+)(out). Functionally, catalytic subunit of the peripheral V1 complex of vacuolar ATPase. V-ATPase vacuolar ATPase is responsible for acidifying a variety of intracellular compartments in eukaryotic cells. The sequence is that of V-type proton ATPase catalytic subunit A from Trypanosoma congolense.